We begin with the raw amino-acid sequence, 365 residues long: A-type ATP synthase subunit C (365 aa).

It belongs to the V-ATPase V0D/AC39 subunit family. As to quaternary structure, has multiple subunits with at least A(3), B(3), C, D, E, F, H, I and proteolipid K(x).

The protein resides in the cell membrane. Component of the A-type ATP synthase that produces ATP from ADP in the presence of a proton gradient across the membrane. This Thermococcus kodakarensis (strain ATCC BAA-918 / JCM 12380 / KOD1) (Pyrococcus kodakaraensis (strain KOD1)) protein is A-type ATP synthase subunit C.